Reading from the N-terminus, the 463-residue chain is A-type ATP synthase subunit B (463 aa).

It belongs to the ATPase alpha/beta chains family. Has multiple subunits with at least A(3), B(3), C, D, E, F, H, I and proteolipid K(x).

The protein localises to the cell membrane. In terms of biological role, component of the A-type ATP synthase that produces ATP from ADP in the presence of a proton gradient across the membrane. The B chain is a regulatory subunit. This is A-type ATP synthase subunit B from Methanothermobacter thermautotrophicus (strain ATCC 29096 / DSM 1053 / JCM 10044 / NBRC 100330 / Delta H) (Methanobacterium thermoautotrophicum).